The following is a 299-amino-acid chain: MPGRLLRGLWQRWRRYKYRFVPWIALNLSHNPRTLRYVPEESKDKVISDEDVLGTLLKVFQALFLNDFNKQSEILSMLPESVKSKYQDLLAVEHQGVKLLENRHQQQSTFKPEEILYKTLGFSVAQATSSLISAGKGVFVTKGLVPKGAVVSMYPGTVYQKYEPIFFQSIGNPFIFRCLDGVLIDGNDKGISKVVYRSCNGRDRLGPLKMSDSTWLTSEIHNPLAVGQYVNNCSNDRAANVCYQEFDVPAVFPIELKQYLPNIAYSYDKQSPLRCVVLVALRDINQGEELFSNYYTIVS.

The 174-residue stretch at 122–295 (FSVAQATSSL…QGEELFSNYY (174 aa)) folds into the SET domain. Position 294 (Tyr294) interacts with S-adenosyl-L-methionine.

It belongs to the class V-like SAM-binding methyltransferase superfamily.

In Homo sapiens (Human), this protein is SET domain-containing protein 9 (SETD9).